The following is a 681-amino-acid chain: Envelope glycoprotein (681 aa).

Positions Met-1–Thr-18 are cleaved as a signal peptide. Over Leu-19–Asp-648 the chain is Extracellular. The interval Ser-38 to His-188 is receptor-binding. N-linked (GlcNAc...) asparagine; by host glycans are attached at residues Asn-94, Asn-171, Asn-190, Asn-202, Asn-207, Asn-219, and Asn-223. The tract at residues Asn-223–Pro-428 is disordered. Polar residues-rich tracts occupy residues Pro-236–Ser-260 and Pro-278–Ser-315. The interval Gly-277–Glu-455 is mucin-like region. N-linked (GlcNAc...) asparagine; by host glycans are attached at residues Asn-310, Asn-323, Asn-336, Asn-350, Asn-360, Asn-364, Asn-381, Asn-397, Asn-475, and Asn-487. A compositionally biased stretch (low complexity) spans Pro-327 to Leu-347. 2 stretches are compositionally biased toward polar residues: residues Lys-348–Asp-365 and Ser-373–Gln-394. Over residues Asp-395–Pro-428 the composition is skewed to low complexity. The fusion peptide stretch occupies residues Gly-529–Ile-549. N-linked (GlcNAc...) asparagine; by host glycosylation is found at Asn-564 and Asn-619. A helical transmembrane segment spans residues Trp-649 to Leu-669. The Cytoplasmic segment spans residues Ser-670 to Gly-681. 2 S-palmitoyl cysteine; by host lipidation sites follow: Cys-671 and Cys-673.

The protein belongs to the filoviruses glycoprotein family. Homotrimer; each monomer consists of a GP1 and a GP2 subunit linked by disulfide bonds. The resulting peplomers (GP1,2) protrude from the virus surface as spikes. GP1,2 interacts with human CD209 and CLEC4M (collectively referred to as DC-SIGN(R)). Asialoglycoprotein receptor (ASGP-R) may be a liver-specific receptor for GP1,2. Members of the Tyro3 receptor tyrosine kinase family may be cell entry factors interacting with GP1,2. N-glycosylated. In terms of processing, O-glycosylated in the mucin-like region. Post-translationally, specific enzymatic cleavages in vivo yield mature proteins. The precursor is processed into GP1 and GP2 by host cell furin in the trans Golgi, and maybe by other host proteases, to yield the mature GP1 and GP2 proteins. The cleavage site corresponds to the furin optimal cleavage sequence [KR]-X-[KR]-R. GP1 is phosphorylated on serine residues between residues 260 and 273.

The protein localises to the virion membrane. It localises to the host cell membrane. GP1 is responsible for binding to the receptor(s) on target cells. Interacts with CD209/DC-SIGN and CLEC4M/DC-SIGNR which act as cofactors for virus entry into the host cell. Binding to CD209 and CLEC4M, which are respectively found on dendritic cells (DCs), and on endothelial cells of liver sinusoids and lymph node sinuses, facilitate infection of macrophages and endothelial cells. These interactions not only facilitate virus cell entry, but also allow capture of viral particles by DCs and subsequent transmission to susceptible cells without DCs infection (trans infection). Its function is as follows. GP2 acts as a class I viral fusion protein. Under the current model, the protein has at least 3 conformational states: pre-fusion native state, pre-hairpin intermediate state, and post-fusion hairpin state. During viral and target cell membrane fusion, the coiled coil regions (heptad repeats) assume a trimer-of-hairpins structure, positioning the fusion peptide in close proximity to the C-terminal region of the ectodomain. The formation of this structure appears to drive apposition and subsequent fusion of viral and target cell membranes. Responsible for penetration of the virus into the cell cytoplasm by mediating the fusion of the membrane of the endocytosed virus particle with the endosomal membrane. Low pH in endosomes induces an irreversible conformational change in GP2, releasing the fusion hydrophobic peptide. This chain is Envelope glycoprotein (GP), found in Chlorocebus aethiops (Green monkey).